Here is a 150-residue protein sequence, read N- to C-terminus: Large ribosomal subunit protein bL9 (150 aa).

The protein belongs to the bacterial ribosomal protein bL9 family.

Binds to the 23S rRNA. This is Large ribosomal subunit protein bL9 from Corynebacterium efficiens (strain DSM 44549 / YS-314 / AJ 12310 / JCM 11189 / NBRC 100395).